A 574-amino-acid polypeptide reads, in one-letter code: Kelch-like protein 35 (574 aa).

The 71-residue stretch at 40–110 (TDVVLRAGGR…VYGAGVRLRA (71 aa)) folds into the BTB domain. Positions 146-248 (SLALRRVAAA…APAYFLEKVE (103 aa)) constitute a BACK domain. 6 Kelch repeats span residues 292-341 (VIVV…ALRN), 343-385 (IYVS…ALQG), 386-432 (QLFA…PCAG), 434-480 (LYVI…SLED), 481-522 (TIYV…VCDG), and 524-570 (VHIL…TIVQ).

The sequence is that of Kelch-like protein 35 (Klhl35) from Mus musculus (Mouse).